Consider the following 238-residue polypeptide: Cysteine-rich venom protein 2 (238 aa).

A signal peptide spans 1–19; the sequence is MIAFIVLLSLAAVLQQSSG. Positions 38-164 constitute an SCP domain; that stretch reads VDKHNALRRS…STKYLYVCQY (127 aa). Disulfide bonds link cysteine 75–cysteine 153, cysteine 92–cysteine 165, cysteine 148–cysteine 162, cysteine 184–cysteine 191, cysteine 187–cysteine 196, cysteine 200–cysteine 233, cysteine 209–cysteine 227, and cysteine 218–cysteine 231. The region spanning 200–233 is the ShKT domain; the sequence is CEYEDAYTNCNDLVKERKCQTEWIKSQCPATCFC.

Belongs to the CRISP family. As to expression, expressed by the venom gland.

The protein resides in the secreted. Functionally, blocks contraction of smooth muscle elicited by high potassium-induced depolarization, but does not block caffeine-stimulated contraction. May target voltage-gated calcium channels (Cav) on smooth muscle. The chain is Cysteine-rich venom protein 2 from Hydrophis hardwickii (Hardwick's spine-bellied seasnake).